Here is a 166-residue protein sequence, read N- to C-terminus: NAD(P)H-quinone oxidoreductase subunit I, chloroplastic (166 aa).

4Fe-4S ferredoxin-type domains lie at 55–84 and 95–124; these read GRIHFEFDKCIACEVCVRVCPIDLPVVDWK and LNYSIDFGICIFCGNCVEYCPTNCLSMTEE. Residues Cys-64, Cys-67, Cys-70, Cys-74, Cys-104, Cys-107, Cys-110, and Cys-114 each contribute to the [4Fe-4S] cluster site.

It belongs to the complex I 23 kDa subunit family. In terms of assembly, NDH is composed of at least 16 different subunits, 5 of which are encoded in the nucleus. It depends on [4Fe-4S] cluster as a cofactor.

The protein localises to the plastid. Its subcellular location is the chloroplast thylakoid membrane. It catalyses the reaction a plastoquinone + NADH + (n+1) H(+)(in) = a plastoquinol + NAD(+) + n H(+)(out). The catalysed reaction is a plastoquinone + NADPH + (n+1) H(+)(in) = a plastoquinol + NADP(+) + n H(+)(out). Its function is as follows. NDH shuttles electrons from NAD(P)H:plastoquinone, via FMN and iron-sulfur (Fe-S) centers, to quinones in the photosynthetic chain and possibly in a chloroplast respiratory chain. The immediate electron acceptor for the enzyme in this species is believed to be plastoquinone. Couples the redox reaction to proton translocation, and thus conserves the redox energy in a proton gradient. The sequence is that of NAD(P)H-quinone oxidoreductase subunit I, chloroplastic from Guardiola tulocarpus.